Here is a 509-residue protein sequence, read N- to C-terminus: Histidine ammonia-lyase (509 aa).

The 5-imidazolinone (Ala-Gly) cross-link spans 144–146; the sequence is ASG. Serine 145 is modified (2,3-didehydroalanine (Ser)).

The protein belongs to the PAL/histidase family. Contains an active site 4-methylidene-imidazol-5-one (MIO), which is formed autocatalytically by cyclization and dehydration of residues Ala-Ser-Gly.

Its subcellular location is the cytoplasm. The catalysed reaction is L-histidine = trans-urocanate + NH4(+). It functions in the pathway amino-acid degradation; L-histidine degradation into L-glutamate; N-formimidoyl-L-glutamate from L-histidine: step 1/3. The chain is Histidine ammonia-lyase from Rhodospirillum centenum (strain ATCC 51521 / SW).